Here is a 120-residue protein sequence, read N- to C-terminus: MSKVIFALVLVVVLVACINATYVEFEEAYAPVDCKGQCTTPCEPLTACKEKCAESCETSADKKTCRRNCKKADCEPQDKVCDACRMKCHKACRAANCASECPKHEHKSDTCRACMKTNCK.

A signal peptide spans 1 to 20 (MSKVIFALVLVVVLVACINA). Residues 21–29 (TYVEFEEAY) constitute a propeptide that is removed on maturation. 9 disulfide bridges follow: C34–C88, C38–C84, C42–C81, C48–C74, C52–C69, C56–C65, C92–C119, C97–C114, and C101–C111.

As to quaternary structure, interacts with VIP1. Expressed in vanadocytes.

It is found in the cytoplasm. Acts as a vanadium reductase which may form an electron transfer cascade in conjunction with NADPH and glutathione through thiol disulfide exchange reactions. Partial cleavage of its disulfide bonds results in the reduction of V(5+) to V(4+). Binds up to 24 V(4+) ions per protein at pH 7.5. Also binds Fe(3+) and Cu(2+) and, to a lesser extent, Co(2+), Zn(2+) and Ni(2+). In Ascidia sydneiensis samea (Vanadium-rich ascidian), this protein is Vanadium-binding protein 2.